The following is a 119-amino-acid chain: Platelet basic protein (119 aa).

Positions Met-1–Leu-33 are cleaved as a signal peptide. Residues Val-34–Gly-39 constitute a propeptide that is removed on maturation. Disulfide bonds link Cys-54/Cys-80 and Cys-56/Cys-96.

The protein resides in the secreted. Its function is as follows. Chemoattractant factor for neutrophils. This is Platelet basic protein (PPBP) from Sus scrofa (Pig).